The following is a 414-amino-acid chain: Secernin-1 (414 aa).

The protein belongs to the peptidase C69 family. Secernin subfamily.

It localises to the cytoplasm. Its function is as follows. Regulates exocytosis in mast cells. Increases both the extent of secretion and the sensitivity of mast cells to stimulation with calcium. The protein is Secernin-1 (Scrn1) of Rattus norvegicus (Rat).